Here is a 35-residue protein sequence, read N- to C-terminus: Cecropin (35 aa).

An Isoleucine amide modification is found at Ile35.

Belongs to the cecropin family.

Its subcellular location is the secreted. Functionally, cecropins have lytic and antibacterial activity against several Gram-positive and Gram-negative bacteria. The sequence is that of Cecropin from Bombyx mori (Silk moth).